The primary structure comprises 325 residues: Lipoyl synthase (325 aa).

The tract at residues Met-1–Pro-32 is disordered. The segment covering Ala-19–Pro-32 has biased composition (basic and acidic residues). 7 residues coordinate [4Fe-4S] cluster: Cys-66, Cys-71, Cys-77, Cys-92, Cys-96, Cys-99, and Ser-305. One can recognise a Radical SAM core domain in the interval Trp-78–Leu-294.

It belongs to the radical SAM superfamily. Lipoyl synthase family. [4Fe-4S] cluster serves as cofactor.

It is found in the cytoplasm. It catalyses the reaction [[Fe-S] cluster scaffold protein carrying a second [4Fe-4S](2+) cluster] + N(6)-octanoyl-L-lysyl-[protein] + 2 oxidized [2Fe-2S]-[ferredoxin] + 2 S-adenosyl-L-methionine + 4 H(+) = [[Fe-S] cluster scaffold protein] + N(6)-[(R)-dihydrolipoyl]-L-lysyl-[protein] + 4 Fe(3+) + 2 hydrogen sulfide + 2 5'-deoxyadenosine + 2 L-methionine + 2 reduced [2Fe-2S]-[ferredoxin]. Its pathway is protein modification; protein lipoylation via endogenous pathway; protein N(6)-(lipoyl)lysine from octanoyl-[acyl-carrier-protein]: step 2/2. Catalyzes the radical-mediated insertion of two sulfur atoms into the C-6 and C-8 positions of the octanoyl moiety bound to the lipoyl domains of lipoate-dependent enzymes, thereby converting the octanoylated domains into lipoylated derivatives. The polypeptide is Lipoyl synthase (Beijerinckia indica subsp. indica (strain ATCC 9039 / DSM 1715 / NCIMB 8712)).